A 249-amino-acid chain; its full sequence is Probable transcriptional regulatory protein Wbm0670 (249 aa).

Belongs to the TACO1 family.

Its subcellular location is the cytoplasm. The protein is Probable transcriptional regulatory protein Wbm0670 of Wolbachia sp. subsp. Brugia malayi (strain TRS).